An 86-amino-acid polypeptide reads, in one-letter code: Small ribosomal subunit protein bS20 (86 aa).

A compositionally biased stretch (basic residues) spans 1–11 (MANHKSALKRA). Residues 1-27 (MANHKSALKRARQNEERRIRNRARKTR) form a disordered region.

Belongs to the bacterial ribosomal protein bS20 family.

Functionally, binds directly to 16S ribosomal RNA. The protein is Small ribosomal subunit protein bS20 of Syntrophobacter fumaroxidans (strain DSM 10017 / MPOB).